Consider the following 783-residue polypeptide: DNA polymerase II (783 aa).

Belongs to the DNA polymerase type-B family.

The enzyme catalyses DNA(n) + a 2'-deoxyribonucleoside 5'-triphosphate = DNA(n+1) + diphosphate. DNA polymerase II activity is regulated by the lexA gene during the SOS response. Its function is as follows. Thought to be involved in DNA repair and/or mutagenesis. Its processivity is enhanced by the beta sliding clamp (dnaN) and clamp loader. This Escherichia coli (strain K12) protein is DNA polymerase II (polB).